A 160-amino-acid polypeptide reads, in one-letter code: General odorant-binding protein 2 (160 aa).

A signal peptide spans 1 to 20 (MFSFLILVFVASVADSVIGT). Disulfide bonds link Cys38-Cys73, Cys69-Cys127, and Cys116-Cys136.

The protein belongs to the PBP/GOBP family. In terms of assembly, homodimer. As to expression, detected in antenna (at protein level). Expressed at high levels in antenna.

In terms of biological role, present in the aqueous fluid surrounding olfactory sensory dendrites and are thought to aid in the capture and transport of hydrophobic odorants into and through this fluid. The sequence is that of General odorant-binding protein 2 from Bombyx mori (Silk moth).